The sequence spans 380 residues: Bifunctional enzyme IspD/IspF (380 aa).

The tract at residues 1-224 (MTIPATYAAI…ERILGDAMDI (224 aa)) is 2-C-methyl-D-erythritol 4-phosphate cytidylyltransferase. The 2-C-methyl-D-erythritol 2,4-cyclodiphosphate synthase stretch occupies residues 225–380 (RLGNGFDVHA…SIATATLVKG (156 aa)). Residues aspartate 231 and histidine 233 each coordinate a divalent metal cation. Residues 231-233 (DVH) and 257-258 (HS) each bind 4-CDP-2-C-methyl-D-erythritol 2-phosphate. Histidine 265 lines the a divalent metal cation pocket. Residues 279–281 (DIG), 355–358 (TTSE), phenylalanine 362, and arginine 365 each bind 4-CDP-2-C-methyl-D-erythritol 2-phosphate.

The protein in the N-terminal section; belongs to the IspD/TarI cytidylyltransferase family. IspD subfamily. This sequence in the C-terminal section; belongs to the IspF family. A divalent metal cation is required as a cofactor.

The catalysed reaction is 2-C-methyl-D-erythritol 4-phosphate + CTP + H(+) = 4-CDP-2-C-methyl-D-erythritol + diphosphate. It carries out the reaction 4-CDP-2-C-methyl-D-erythritol 2-phosphate = 2-C-methyl-D-erythritol 2,4-cyclic diphosphate + CMP. It participates in isoprenoid biosynthesis; isopentenyl diphosphate biosynthesis via DXP pathway; isopentenyl diphosphate from 1-deoxy-D-xylulose 5-phosphate: step 2/6. Its pathway is isoprenoid biosynthesis; isopentenyl diphosphate biosynthesis via DXP pathway; isopentenyl diphosphate from 1-deoxy-D-xylulose 5-phosphate: step 4/6. Its function is as follows. Bifunctional enzyme that catalyzes the formation of 4-diphosphocytidyl-2-C-methyl-D-erythritol from CTP and 2-C-methyl-D-erythritol 4-phosphate (MEP) (IspD), and catalyzes the conversion of 4-diphosphocytidyl-2-C-methyl-D-erythritol 2-phosphate (CDP-ME2P) to 2-C-methyl-D-erythritol 2,4-cyclodiphosphate (ME-CPP) with a corresponding release of cytidine 5-monophosphate (CMP) (IspF). This Paracoccus denitrificans (strain Pd 1222) protein is Bifunctional enzyme IspD/IspF.